Reading from the N-terminus, the 330-residue chain is Aspartate--ammonia ligase (330 aa).

This sequence belongs to the class-II aminoacyl-tRNA synthetase family. AsnA subfamily.

The protein localises to the cytoplasm. It carries out the reaction L-aspartate + NH4(+) + ATP = L-asparagine + AMP + diphosphate + H(+). It functions in the pathway amino-acid biosynthesis; L-asparagine biosynthesis; L-asparagine from L-aspartate (ammonia route): step 1/1. This Salmonella paratyphi A (strain ATCC 9150 / SARB42) protein is Aspartate--ammonia ligase.